The chain runs to 185 residues: MKTAQELRVGNVIMVGKDPLVVQKTEYNKSGRNAAVVKLKFKNLLTGSGSESVYKADEKFDVVVLERKECTYSYFGDPMYVFMDEEYNQYEIEADSMGDALNYLEEAMPVEVVFYDGRAISVELPTILVREITYTEPAVRGDTSGKVLKPAKINTGFELSVPLFCAIGDKIEIDTRTNEYRSRVN.

It belongs to the elongation factor P family.

Its subcellular location is the cytoplasm. It participates in protein biosynthesis; polypeptide chain elongation. Involved in peptide bond synthesis. Stimulates efficient translation and peptide-bond synthesis on native or reconstituted 70S ribosomes in vitro. Probably functions indirectly by altering the affinity of the ribosome for aminoacyl-tRNA, thus increasing their reactivity as acceptors for peptidyl transferase. The sequence is that of Elongation factor P from Bordetella bronchiseptica (strain ATCC BAA-588 / NCTC 13252 / RB50) (Alcaligenes bronchisepticus).